Consider the following 270-residue polypeptide: Putative hydro-lyase Reut_A2449 (270 aa).

Belongs to the D-glutamate cyclase family.

The polypeptide is Putative hydro-lyase Reut_A2449 (Cupriavidus pinatubonensis (strain JMP 134 / LMG 1197) (Cupriavidus necator (strain JMP 134))).